Consider the following 44-residue polypeptide: Peptide Hact-4 (44 aa).

3 disulfides stabilise this stretch: C8-C42, C15-C34, and C20-C43.

Expressed in tentacles.

The protein resides in the nematocyst. Its subcellular location is the secreted. Its function is as follows. Peptide with unknown function. Does not exhibit antimicrobial activity against Escherichia coli and Staphylococcus aureus. Does not exhibit any effect on human ion channel TRPV1 in a Xenopus laevis oocytes assay. The protein is Peptide Hact-4 of Heliofungia actiniformis (Mushroom coral).